The chain runs to 527 residues: Berberine bridge enzyme-like 5 (527 aa).

Residues 1-19 form the signal peptide; sequence MKALFSVLCLVLLVSILRA. A disulfide bridge links cysteine 32 with cysteine 95. N-linked (GlcNAc...) asparagine glycosylation is found at asparagine 35 and asparagine 52. In terms of domain architecture, FAD-binding PCMH-type spans 73-247; the sequence is NYQKLVAIVA…LSWKINLVEV (175 aa). The segment at residues 110 to 172 is a cross-link (6-(S-cysteinyl)-8alpha-(pros-histidyl)-FAD (His-Cys)); it reads HDYEGLSYTS…QTLAFPAGVC (63 aa). Asparagine 341 is a glycosylation site (N-linked (GlcNAc...) asparagine).

It belongs to the oxygen-dependent FAD-linked oxidoreductase family. It depends on FAD as a cofactor. In terms of processing, the FAD cofactor is bound via a bicovalent 6-S-cysteinyl, 8alpha-N1-histidyl FAD linkage.

The protein resides in the secreted. Its subcellular location is the cell wall. Functionally, probable flavin-dependent oxidoreductase. This Arabidopsis thaliana (Mouse-ear cress) protein is Berberine bridge enzyme-like 5.